Consider the following 150-residue polypeptide: MEGTRSRVRITVEAEVRPTEDREKVLKAVRNVVEPESVRFEKIGSTEILVGESSTLASLSRLHSILRAERILDAARGAMKKGVQGADRMTIHLHKQAAYKGRLSFVSSDHESPMGAIRITIEHPNVREVIDWLAPPTVRGRPVFERRMPE.

It belongs to the UPF0201 family.

This chain is UPF0201 protein APE_1751, found in Aeropyrum pernix (strain ATCC 700893 / DSM 11879 / JCM 9820 / NBRC 100138 / K1).